The following is a 461-amino-acid chain: Phenolic glucoside malonyltransferase 1 (461 aa).

Residue His-167 is the Proton acceptor of the active site. The HXXXD motif motif lies at 167 to 171 (HAAQD). Residue 281 to 282 (ST) coordinates malonyl-CoA. Asp-400 acts as the Proton acceptor in catalysis. The DFGWG motif motif lies at 400–404 (DFGWG).

The protein belongs to the plant acyltransferase family. Phenolic glucoside malonyltransferase subfamily. Expressed in all tissues. Most highly expressed in the abdomen and especially in the gut.

It carries out the reaction a flavonol 3-O-beta-D-glucoside + malonyl-CoA = a flavonol 3-O-(6-O-malonyl-beta-D-glucoside) + CoA. The catalysed reaction is kaempferol 3-O-beta-D-glucoside + malonyl-CoA = kaempferol 3-O-(6-O-malonyl-beta-D-glucoside) + CoA. It catalyses the reaction quercetin 3-O-beta-D-glucoside + malonyl-CoA = quercetin 3-O-(6-O-malonyl-beta-D-glucoside) + CoA. The enzyme catalyses a flavonol 7-O-beta-D-glucoside + malonyl-CoA = a flavonol 7-O-(6-O-malonyl-beta-D-glucoside) + CoA. It carries out the reaction (2S)-naringenin 7-O-beta-D-glucoside + malonyl-CoA = (2S)-naringenin 7-O-(6-O-malonyl-beta-D-glucoside) + CoA. The catalysed reaction is kaempferol 7-O-beta-D-glucoside + malonyl-CoA = kaempferol 7-O-(6-O-malonyl-beta-D-glucoside) + CoA. It catalyses the reaction apigenin 7-O-beta-D-glucoside + malonyl-CoA = apigenin 7-O-(6-O-malonyl-beta-D-glucoside) + CoA. The enzyme catalyses rhaponticin + malonyl-CoA = 6-O-malonyl-rhaponticin + CoA. In terms of biological role, phenolic glucoside malonyltransferase that neutralizes phenolic glycosides in host plants. Catalyzes the transfer of a malonyl group from malonyl-CoA to the phenolic glycosides, leading to their detoxification. Phenolic glycosides, which are among the most abundant plant secondary metabolites, act as plant defense compounds: they strongly affect growth, development and behavior of insect herbivores. Has malonyltransferase activity against flavonoids kaempferol 3-O-glucoside, kaempferol 7-O-glucoside, isoquercetin (quercetin 3-O-beta-D-glucopyranoside), apigetrin (apigenin 7-O-beta-D-glucoside) and prunin (naringenin 7-O-beta-D-glucoside). Also has activity toward non-flavonoid rhaponticin, but with lower efficiency. The chain is Phenolic glucoside malonyltransferase 1 from Bemisia tabaci (Sweetpotato whitefly).